Reading from the N-terminus, the 367-residue chain is uncharacterized protein (367 aa).

A run of 4 helical transmembrane segments spans residues 18–38 (ILALLGIIIGVAAISSLGILG), 239–259 (VSYFLMGIGAISLLVAGIGIG), 296–316 (ILGVIGSLIGAFLSLFFGYLI), and 329–349 (AIFYMIIGIIFGILTSLISAL).

Belongs to the ABC-4 integral membrane protein family.

Its subcellular location is the cell membrane. This is an uncharacterized protein from Methanocaldococcus jannaschii (strain ATCC 43067 / DSM 2661 / JAL-1 / JCM 10045 / NBRC 100440) (Methanococcus jannaschii).